The following is a 376-amino-acid chain: 26S proteasome non-ATPase regulatory subunit 13 (376 aa).

A PCI domain is found at 171 to 338 (SYYKDALRFL…KRVHMTWVQP (168 aa)). The residue at position 298 (lysine 298) is an N6-acetyllysine.

The protein belongs to the proteasome subunit S11 family. In terms of assembly, component of the 19S proteasome regulatory particle complex. The 26S proteasome consists of a 20S core particle (CP) and two 19S regulatory subunits (RP). The regulatory particle is made of a lid composed of 9 subunits including PSMD13, a base containing 6 ATPases and few additional components.

Functionally, component of the 26S proteasome, a multiprotein complex involved in the ATP-dependent degradation of ubiquitinated proteins. This complex plays a key role in the maintenance of protein homeostasis by removing misfolded or damaged proteins, which could impair cellular functions, and by removing proteins whose functions are no longer required. Therefore, the proteasome participates in numerous cellular processes, including cell cycle progression, apoptosis, or DNA damage repair. This Mus musculus (Mouse) protein is 26S proteasome non-ATPase regulatory subunit 13 (Psmd13).